The sequence spans 204 residues: Large ribosomal subunit protein eL15 (204 aa).

This sequence belongs to the eukaryotic ribosomal protein eL15 family. In terms of assembly, component of the large ribosomal subunit.

It localises to the cytoplasm. In terms of biological role, component of the large ribosomal subunit. The ribosome is a large ribonucleoprotein complex responsible for the synthesis of proteins in the cell. The protein is Large ribosomal subunit protein eL15 (rpl15) of Monopterus albus (Swamp eel).